A 159-amino-acid chain; its full sequence is Large ribosomal subunit protein mL50 (159 aa).

The protein belongs to the mitochondrion-specific ribosomal protein mL50 family. Component of the mitochondrial ribosome large subunit (39S) which comprises a 16S rRNA and about 50 distinct proteins.

The protein resides in the mitochondrion. This is Large ribosomal subunit protein mL50 (MRPL50) from Bos taurus (Bovine).